A 78-amino-acid polypeptide reads, in one-letter code: Large ribosomal subunit protein bL28 (78 aa).

A disordered region spans residues 1 to 24; it reads MSRVCQVTGKRPAVGNNRSHANNA.

The protein belongs to the bacterial ribosomal protein bL28 family.

The chain is Large ribosomal subunit protein bL28 from Aeromonas salmonicida (strain A449).